The following is a 181-amino-acid chain: Adenylate kinase (181 aa).

10-15 (GAGKGT) serves as a coordination point for ATP. Residues 30-59 (STGDLFRANIGEGTPLGLEAKSYIDAGKLV) are NMP. Residues Thr31, Arg36, 57–59 (KLV), 85–88 (GFPR), and Gln92 contribute to the AMP site. The interval 126–132 (ARGRADD) is LID. Arg127 is an ATP binding site. AMP-binding residues include Arg129 and Arg140. Gly166 is an ATP binding site.

This sequence belongs to the adenylate kinase family. In terms of assembly, monomer.

Its subcellular location is the cytoplasm. The catalysed reaction is AMP + ATP = 2 ADP. The protein operates within purine metabolism; AMP biosynthesis via salvage pathway; AMP from ADP: step 1/1. Catalyzes the reversible transfer of the terminal phosphate group between ATP and AMP. Plays an important role in cellular energy homeostasis and in adenine nucleotide metabolism. The polypeptide is Adenylate kinase (Corynebacterium aurimucosum (strain ATCC 700975 / DSM 44827 / CIP 107346 / CN-1) (Corynebacterium nigricans)).